The primary structure comprises 239 residues: Probable transcriptional regulatory protein EF_2866 (239 aa).

It belongs to the TACO1 family. YeeN subfamily.

It localises to the cytoplasm. In Enterococcus faecalis (strain ATCC 700802 / V583), this protein is Probable transcriptional regulatory protein EF_2866.